A 93-amino-acid chain; its full sequence is Small integral membrane protein 36 (93 aa).

The chain crosses the membrane as a helical span at residues 14 to 34; sequence LIILVASYVILLLVFLISCVL. Positions 73–93 are disordered; sequence PKGPGLSLGDPAPLGKKSTMV.

The protein localises to the membrane. The sequence is that of Small integral membrane protein 36 from Homo sapiens (Human).